Reading from the N-terminus, the 655-residue chain is NACHT, LRR and PYD domains-containing protein 10 (655 aa).

The region spanning 1–96 (MAMAKARKPR…VDQLSHICLH (96 aa)) is the Pyrin domain. The NACHT domain occupies 167-484 (SLVVLQGSAG…AMSYLVKEDQ (318 aa)). Residue 173-180 (GSAGTGKT) coordinates ATP. Residues 597 to 609 (QSQNLFSVKSSLS) are compositionally biased toward polar residues. The segment at 597-655 (QSQNLFSVKSSLSHGPKEEQKCPSVHGQKEGKDNIAGTQKEASTGKGRGTEETPKNTYI) is disordered. Basic and acidic residues-rich tracts occupy residues 611–629 (GPKEEQKCPSVHGQKEGKD) and 644–655 (RGTEETPKNTYI).

Belongs to the NLRP family. In terms of assembly, oligomerizes. Interacts with PYCARD. Also interacts with CASP1 and IL1B. Interacts with NOD1 and components of the NOD1 signaling pathway including RIPK2, NR2C2/TAK1 and IKBKG/NEMO. Highly expressed in basal and suprabasal epidermal cell layers with lower levels in dermal fibroblast cells (at protein level). Widely expressed with highest levels in heart, brain and skeletal muscle. Also expressed in liver, colon, dermis and epidermis. Little expression detected in myeloid cells or peripheral blood mononuclear cells.

The protein localises to the cytoplasm. Its subcellular location is the cell membrane. Inhibits autoprocessing of CASP1, CASP1-dependent IL1B secretion, PYCARD aggregation and PYCARD-mediated apoptosis but not apoptosis induced by FAS or BID. Displays anti-inflammatory activity. Required for immunity against C.albicans infection. Involved in the innate immune response by contributing to pro-inflammatory cytokine release in response to invasive bacterial infection. Contributes to T-cell-mediated inflammatory responses in the skin. Plays a role in protection against periodontitis through its involvement in induction of IL1A via ERK activation in oral epithelial cells infected with periodontal pathogens. Exhibits both ATPase and GTPase activities. This Homo sapiens (Human) protein is NACHT, LRR and PYD domains-containing protein 10 (NLRP10).